The primary structure comprises 250 residues: Sulfate transporter CysZ (250 aa).

Transmembrane regions (helical) follow at residues 27-47, 64-84, 150-170, and 210-230; these read FVVL…YYLF, FLSW…LATF, FLLL…WFLF, and MLVA…PVAV.

It belongs to the CysZ family.

It localises to the cell inner membrane. High affinity, high specificity proton-dependent sulfate transporter, which mediates sulfate uptake. Provides the sulfur source for the cysteine synthesis pathway. This Vibrio cholerae serotype O1 (strain ATCC 39541 / Classical Ogawa 395 / O395) protein is Sulfate transporter CysZ.